The following is a 1563-amino-acid chain: Pentafunctional AROM polypeptide (1563 aa).

The tract at residues 1-382 is 3-dehydroquinate synthase; it reads MAESSSNPTR…YEPKASVVED (382 aa). NAD(+) is bound by residues 48-50, 82-85, 113-115, and Asp118; these read DTN, EYSK, and GGV. Position 129 (Arg129) interacts with 7-phospho-2-dehydro-3-deoxy-D-arabino-heptonate. Residue 138-139 coordinates NAD(+); sequence TT. 7-phospho-2-dehydro-3-deoxy-D-arabino-heptonate contacts are provided by Asp145 and Lys151. Residue Lys160 participates in NAD(+) binding. Asn161 contributes to the 7-phospho-2-dehydro-3-deoxy-D-arabino-heptonate binding site. NAD(+) is bound by residues 178 to 181 and Asn189; that span reads FLNT. A Zn(2+)-binding site is contributed by Glu193. 7-phospho-2-dehydro-3-deoxy-D-arabino-heptonate is bound by residues 193–196 and Lys248; that span reads EVIK. Glu258 (proton acceptor; for 3-dehydroquinate synthase activity) is an active-site residue. Residues 262-266 and His269 each bind 7-phospho-2-dehydro-3-deoxy-D-arabino-heptonate; that span reads RNLLN. A Zn(2+)-binding site is contributed by His269. The active-site Proton acceptor; for 3-dehydroquinate synthase activity is His273. Residues His285 and Lys354 each contribute to the 7-phospho-2-dehydro-3-deoxy-D-arabino-heptonate site. His285 contacts Zn(2+). The interval 395–834 is EPSP synthase; it reads VHAGVPKDLK…WDTMSNYFKS (440 aa). Cys816 (for EPSP synthase activity) is an active-site residue. Positions 836 to 850 are enriched in basic and acidic residues; sequence LEGEEEPHSSHVSHE. Residues 836–857 are disordered; sequence LEGEEEPHSSHVSHEKPRKGNP. The segment at 857–1051 is shikimate kinase; the sequence is PKSIFIIGMR…KKKPQSSFVS (195 aa). 864–871 provides a ligand contact to ATP; sequence GMRGAGKS. The tract at residues 1052–1265 is 3-dehydroquinase; it reads LTVPNVSKAL…AAPGQLSAAE (214 aa). Catalysis depends on His1168, which acts as the Proton acceptor; for 3-dehydroquinate dehydratase activity. Residue Lys1196 is the Schiff-base intermediate with substrate; for 3-dehydroquinate dehydratase activity of the active site. The segment at 1278-1563 is shikimate dehydrogenase; that stretch reads PRSFYLFGKP…TDAQAAVMGN (286 aa).

This sequence in the N-terminal section; belongs to the sugar phosphate cyclases superfamily. Dehydroquinate synthase family. It in the 2nd section; belongs to the EPSP synthase family. The protein in the 3rd section; belongs to the shikimate kinase family. In the 4th section; belongs to the type-I 3-dehydroquinase family. This sequence in the C-terminal section; belongs to the shikimate dehydrogenase family. As to quaternary structure, homodimer. The cofactor is Zn(2+).

It is found in the cytoplasm. The enzyme catalyses 7-phospho-2-dehydro-3-deoxy-D-arabino-heptonate = 3-dehydroquinate + phosphate. The catalysed reaction is 3-dehydroquinate = 3-dehydroshikimate + H2O. It carries out the reaction shikimate + NADP(+) = 3-dehydroshikimate + NADPH + H(+). It catalyses the reaction shikimate + ATP = 3-phosphoshikimate + ADP + H(+). The enzyme catalyses 3-phosphoshikimate + phosphoenolpyruvate = 5-O-(1-carboxyvinyl)-3-phosphoshikimate + phosphate. The protein operates within metabolic intermediate biosynthesis; chorismate biosynthesis; chorismate from D-erythrose 4-phosphate and phosphoenolpyruvate: step 2/7. Its pathway is metabolic intermediate biosynthesis; chorismate biosynthesis; chorismate from D-erythrose 4-phosphate and phosphoenolpyruvate: step 3/7. It participates in metabolic intermediate biosynthesis; chorismate biosynthesis; chorismate from D-erythrose 4-phosphate and phosphoenolpyruvate: step 4/7. It functions in the pathway metabolic intermediate biosynthesis; chorismate biosynthesis; chorismate from D-erythrose 4-phosphate and phosphoenolpyruvate: step 5/7. The protein operates within metabolic intermediate biosynthesis; chorismate biosynthesis; chorismate from D-erythrose 4-phosphate and phosphoenolpyruvate: step 6/7. Its function is as follows. The AROM polypeptide catalyzes 5 consecutive enzymatic reactions in prechorismate polyaromatic amino acid biosynthesis. The chain is Pentafunctional AROM polypeptide from Sordaria macrospora (strain ATCC MYA-333 / DSM 997 / K(L3346) / K-hell).